The following is a 383-amino-acid chain: Transposase InsI for insertion sequence element IS30C (383 aa).

An Integrase catalytic domain is found at 213-379 (VNGTPIHERS…TPKEIIERGV (167 aa)).

The protein belongs to the transposase IS30 family.

Required for the transposition of the insertion element. This Escherichia coli (strain K12) protein is Transposase InsI for insertion sequence element IS30C (insI3).